A 410-amino-acid chain; its full sequence is Arginine deiminase (410 aa).

Cys400 functions as the Amidino-cysteine intermediate in the catalytic mechanism.

It belongs to the arginine deiminase family.

The protein resides in the cytoplasm. It carries out the reaction L-arginine + H2O = L-citrulline + NH4(+). Its pathway is amino-acid degradation; L-arginine degradation via ADI pathway; carbamoyl phosphate from L-arginine: step 1/2. The polypeptide is Arginine deiminase (arcA) (Lactococcus lactis subsp. lactis (strain IL1403) (Streptococcus lactis)).